A 342-amino-acid chain; its full sequence is MDILKSEILRKRQLVEDRNLLVENKKYFKRSELAKKEEEAYFERCGYRIQPKEEDQKPLTSSNPVLELELAEEKLPMTLSRQEVIRRLRERGEPIRLFGETDYDAFQRLRKIEILTPEVNKGLRNDLKAALDKIDQQYLNEIVGGQEPGEEDTQNDLKVHEENTTIEELEALGESLGKGDDHKDMDIITKFLKFLLGVWAKELNAREDYVKRSVQGKLNSATQKQTESYLRPLFRKLRKRNLPADIKESITDIIKFMLQREYVKANDAYLQMAIGNAPWPIGVTMVGIHARTGREKIFSKHVAHVLNDETQRKYIQGLKRLMTICQKHFPTDPSKCVEYNAL.

An N-acetylmethionine modification is found at Met1.

This sequence belongs to the PRP18 family. As to quaternary structure, heterodimer with PPIH. Interacts with PRPF4 and with the spliceosome. Part of a complex containing U4/U6 snRNPs.

It localises to the nucleus speckle. In terms of biological role, participates in the second step of pre-mRNA splicing. The sequence is that of Pre-mRNA-splicing factor 18 (PRPF18) from Pongo abelii (Sumatran orangutan).